The primary structure comprises 505 residues: Xylose import ATP-binding protein XylG (505 aa).

2 ABC transporter domains span residues 6-243 and 262-505; these read LEMR…VGRE and VKNY…TGGK. An ATP-binding site is contributed by 38 to 45; sequence GENGAGKS.

It belongs to the ABC transporter superfamily. Xylose importer (TC 3.A.1.2.4) family. In terms of assembly, the complex is composed of two ATP-binding proteins (XylG), two transmembrane proteins (XylH) and a solute-binding protein (XylF).

The protein localises to the cell membrane. It carries out the reaction D-xylose(out) + ATP + H2O = D-xylose(in) + ADP + phosphate + H(+). Functionally, part of the ABC transporter complex XylFGH involved in xylose import. Responsible for energy coupling to the transport system. This Thermoanaerobacter pseudethanolicus (strain ATCC 33223 / 39E) (Clostridium thermohydrosulfuricum) protein is Xylose import ATP-binding protein XylG.